A 783-amino-acid chain; its full sequence is MRRSLAPSQRLGVRIKSKDAFTPPLQKKNKRVCQEELQKRQSALRDATNRVELPLPIRFTANSEYEQAIAKVLARKFKVPIANYVPDYGGNRTLGVRRTIVRRALHDPQACNALVLYVPPAYTEHERMSMDPSKVQVHVVVDPILSNVLRPHQREGVRFMYECVEGKRGNFNGCIMADEMGLGKTLQCVTLTWTLLRQSPDCKPTISKAIIVSPSSLVKNWEKEFTKWLHGRMHCLAMEGGSKEDTTRALEQFAMNTATRCGTPVLLISYETFRLYAHILCKTEVGMVICDEGHRLKNSDNLTYQALMGLKTKRRVLLSGTPIQNDLTEYFSLVNFVNPEMLGTAADFKRNFENSILRGQNADSTDAERQRALQKTQELIGLVNQCIIRRTNQILTKYLPVKFEMVVCVKLTPVQLQIYTNFLKSDQVRRSLADCNEKASLTALADITTLKKLCNHPDLIYEKIAAKEKGFENSQNVLPPNYKPKDVNPELSGKFMLLDFMLAAIRANSDDKVVLISNYTQTLDLFEQLARKRKYTYVRLDGTMTIKKRSKVVDRFNDPSTDCFLFMLSSKAGGCGLNLIGANRLFMFDPDWNPANDEQAMARVWRDGQKKPCYIYRLVASGSIEEKILQRQTHKKSLSSTIIDNNESSEKHFTRDDLKDLFSFEANVLSDTHNKLKCKRCFQDVQRQPPAENTDCTSHLSQWFHCSNNRGLPDSILSQAWTASKCVSFVFHHRSQAESKPAAITEDDESEQQQQSPKRTSKNDDNDEDFDPENSAEEQFLGF.

The required for chromatin remodeling, strand pairing activities and coupling of ATPase activity stretch occupies residues 2–9 (RRSLAPSQ). The residue at position 22 (Thr-22) is a Phosphothreonine. Residues 165-340 (EGKRGNFNGC…FSLVNFVNPE (176 aa)) enclose the Helicase ATP-binding domain. Position 178 to 185 (178 to 185 (DEMGLGKT)) interacts with ATP. A DEGH box motif is present at residues 291-294 (DEGH). Residues 497-654 (LLDFMLAAIR…NNESSEKHFT (158 aa)) form the Helicase C-terminal domain. Positions 737-783 (AESKPAAITEDDESEQQQQSPKRTSKNDDNDEDFDPENSAEEQFLGF) are disordered. A compositionally biased stretch (acidic residues) spans 765-776 (DNDEDFDPENSA).

It belongs to the SNF2/RAD54 helicase family. In terms of assembly, interacts (via N-terminus) with spn-A/Rad51.

It localises to the nucleus. In terms of biological role, involved in mitotic DNA repair and meiotic recombination. Functions in the recombinational DNA repair pathway. Essential for interhomolog gene conversion (GC), but may have a less important role in intersister GC than spn-A/Rad51. In the presence of DNA, spn-A/Rad51 enhances the ATPase activity of okr/Rad54. The polypeptide is DNA repair and recombination protein RAD54-like (Drosophila mojavensis (Fruit fly)).